The chain runs to 234 residues: MKIIRVQDQLEGGKVAFSLLKESLAKGATTLGLATGSTPITFYQELVNSDLDCSALTSINLDEYVGLPVENDQSYDYFMRDQLFNAKPFKESFLPNGLADDLEAEVKRYDQVIAEHPIDFQILGIGRNGHIGFNEPGTSFAEKTHVVDLQASTIEANSRFFASIDDVPKQAISMGIASIMASKMIVLLAFGKEKAAAIKGMVSGPVTEALPASVLQQHDNVVVIIDEAAASELD.

The active-site Proton acceptor; for enolization step is the D62. N128 acts as the For ring-opening step in catalysis. H130 (proton acceptor; for ring-opening step) is an active-site residue. E135 acts as the For ring-opening step in catalysis.

Belongs to the glucosamine/galactosamine-6-phosphate isomerase family. NagB subfamily.

It catalyses the reaction alpha-D-glucosamine 6-phosphate + H2O = beta-D-fructose 6-phosphate + NH4(+). The protein operates within amino-sugar metabolism; N-acetylneuraminate degradation; D-fructose 6-phosphate from N-acetylneuraminate: step 5/5. Catalyzes the reversible isomerization-deamination of glucosamine 6-phosphate (GlcN6P) to form fructose 6-phosphate (Fru6P) and ammonium ion. The sequence is that of Glucosamine-6-phosphate deaminase from Streptococcus equi subsp. equi (strain 4047).